The chain runs to 217 residues: Protein-L-isoaspartate O-methyltransferase (217 aa).

Serine 61 is a catalytic residue.

This sequence belongs to the methyltransferase superfamily. L-isoaspartyl/D-aspartyl protein methyltransferase family.

It localises to the cytoplasm. It catalyses the reaction [protein]-L-isoaspartate + S-adenosyl-L-methionine = [protein]-L-isoaspartate alpha-methyl ester + S-adenosyl-L-homocysteine. Its function is as follows. Catalyzes the methyl esterification of L-isoaspartyl residues in peptides and proteins that result from spontaneous decomposition of normal L-aspartyl and L-asparaginyl residues. It plays a role in the repair and/or degradation of damaged proteins. This chain is Protein-L-isoaspartate O-methyltransferase, found in Syntrophotalea carbinolica (strain DSM 2380 / NBRC 103641 / GraBd1) (Pelobacter carbinolicus).